The primary structure comprises 446 residues: Tetratricopeptide repeat protein 23 (446 aa).

TPR repeat units follow at residues Leu45 to Cys78, Val137 to Met170, Ala186 to Ser219, Thr310 to Val347, and Ala356 to Leu389. The disordered stretch occupies residues Ala410–Asp446.

As to quaternary structure, associated with the EvC complex composed of EFCAB7, IQCE, EVC2 and EVC.

The protein resides in the cell projection. It localises to the cilium. Functionally, participates positively in the ciliary Hedgehog (Hh) signaling. The sequence is that of Tetratricopeptide repeat protein 23 (TTC23) from Bos taurus (Bovine).